The primary structure comprises 83 residues: Small ribosomal subunit protein bS20 (83 aa).

A disordered region spans residues 1–21; that stretch reads MPNIKSAIKRVRTTETAEERN. The segment covering 12 to 21 has biased composition (basic and acidic residues); the sequence is RTTETAEERN.

This sequence belongs to the bacterial ribosomal protein bS20 family.

In terms of biological role, binds directly to 16S ribosomal RNA. The chain is Small ribosomal subunit protein bS20 from Staphylococcus epidermidis (strain ATCC 35984 / DSM 28319 / BCRC 17069 / CCUG 31568 / BM 3577 / RP62A).